A 324-amino-acid chain; its full sequence is Phthalate 4,5-dioxygenase oxygenase reductase subunit (324 aa).

An FAD-binding FR-type domain is found at 9-111; it reads DGFTGLKVIA…ATPQNEFELI (103 aa). 115-229 contributes to the NAD(+) binding site; that stretch reads RQFIFVAGGI…PGSIHFESFG (115 aa). A 2Fe-2S ferredoxin-type domain is found at 241 to 324; sequence FSVTLGRSGI…ARNDVLVLDL (84 aa). Residues Cys275, Cys280, Cys283, and Cys311 each coordinate [2Fe-2S] cluster.

This sequence belongs to the PDR/VanB family. As to quaternary structure, this dioxygenase system consists of two proteins: phthalate oxygenase and phthalate oxygenase reductase. FMN is required as a cofactor.

The catalysed reaction is phthalate + NADH + O2 + H(+) = cis-4,5-dihydroxycyclohexa-2,6-diene-1,2-dicarboxylate + NAD(+). The protein operates within xenobiotic degradation; phthalate degradation; 3,4-dihydroxybenzoate from phthalate: step 1/3. This chain is Phthalate 4,5-dioxygenase oxygenase reductase subunit (pht2), found in Pseudomonas putida (Arthrobacter siderocapsulatus).